Consider the following 623-residue polypeptide: MEGYHKPDQQKLQALKDTANRLRISSIQATTAAGSGHPTSCCSAAEIMAVLFFHTMRYKSQDPRNPHNDRFVLSKGHAAPILYAVWAEAGFLPEAELLNLRKISSDLDGHPVPKQAFTDVATGSLGQGLGVACGMAYTGKYFDKASYRVYCLLGDGELSEGSVWEAMAFASIYKLDNLVAILDINRLGQSDPAPLQHQMDIYQKRCEAFGWHAVIVDGHSVEELCKAFGQAKHQPTAIIAKTFKGRGITGVEDKESWHGKPLPKNMAEQIIQEIYSQIQSKKKILATPPQEDAPSVDIANIRMPSLPSYKVGDKIATRKAYGQALAKLGHASDRIIALDGDTKNPTFSEIFKKEHPDRFIECYIAEQNMVSIAVGCATRNRTVPFCSTFAAFFTRAFDQIRMAAISESNINLCGSHCGVSIGEDGPSQMALENLAMFRSVPTSTVFYPSDGVVTEKAVELAANTKGICFIRTSRPENAIIYNNNEDFQVGQAKVVLKSKDDQVTVIGAGVTLHEALAAAELLKKEKINIRVLDPFTIKPLDRKLILDSARATKGRILTVEDHYYEGGIGEAVSSAVVGEPGITVTHLAVNRVPRSGKPAELLKMFGIDKDAIAQAVRGLITKA.

Position 1 is an N-acetylmethionine (M1). 2 positions are modified to N6-acetyllysine: K6 and K11. H37 is a binding site for substrate. The thiamine diphosphate site is built by S40 and H77. Position 104 is a phosphoserine (S104). A thiamine diphosphate-binding site is contributed by 123–125 (GSL). K144 bears the N6-acetyllysine mark. A Mg(2+)-binding site is contributed by D155. Positions 156 and 185 each coordinate thiamine diphosphate. N185 and L187 together coordinate Mg(2+). N6-acetyllysine occurs at positions 204, 232, and 241. Thiamine diphosphate-binding residues include K244 and H258. H258 contributes to the substrate binding site. K260 is subject to N6-acetyllysine. Y275 is modified (phosphotyrosine). T287 carries the post-translational modification Phosphothreonine. The residue at position 295 (S295) is a Phosphoserine. R318 contributes to the substrate binding site. K352 participates in a covalent cross-link: Glycyl lysine isopeptide (Lys-Gly) (interchain with G-Cter in SUMO2). E366 serves as the catalytic Proton donor. F392 is a thiamine diphosphate binding site. Residues H416 and D424 each contribute to the substrate site. Q428 is a thiamine diphosphate binding site. Position 474 (R474) interacts with substrate. N6-acetyllysine occurs at positions 538 and 603.

Belongs to the transketolase family. Homodimer. Requires Mg(2+) as cofactor. Ca(2+) serves as cofactor. Mn(2+) is required as a cofactor. The cofactor is Co(2+). It depends on thiamine diphosphate as a cofactor.

The enzyme catalyses D-sedoheptulose 7-phosphate + D-glyceraldehyde 3-phosphate = aldehydo-D-ribose 5-phosphate + D-xylulose 5-phosphate. In terms of biological role, catalyzes the transfer of a two-carbon ketol group from a ketose donor to an aldose acceptor, via a covalent intermediate with the cofactor thiamine pyrophosphate. The polypeptide is Transketolase (TKT) (Pongo abelii (Sumatran orangutan)).